The primary structure comprises 589 residues: Zinc finger protein 131 (589 aa).

The 65-residue stretch at 34–98 (TDITLIVDGH…TYTAKLMIQG (65 aa)) folds into the BTB domain. A Nuclear localization signal 1 motif is present at residues 137 to 148 (TGKNEAKKRKIA). Basic and acidic residues predominate over residues 224 to 234 (GDRKGQIKEDG). Residues 224 to 247 (GDRKGQIKEDGCPSDPTSKQEHMK) are disordered. C2H2-type zinc fingers lie at residues 254-277 (FKCE…NCYH) and 294-316 (HVCQ…LRKH). Glycyl lysine isopeptide (Lys-Gly) (interchain with G-Cter in SUMO2) cross-links involve residues K255 and K261. The short motif at 283-294 (VSKKQRTGKKIH) is the Nuclear localization signal 2 element. The C2H2-type 3; degenerate zinc finger occupies 322–347 (FECPNCHERFARNSTLKCHLTACQTG). 2 consecutive C2H2-type zinc fingers follow at residues 358–380 (YECQ…LVIH) and 386–409 (NHCT…SDAH). Residues 539-583 (NQEERESSQADAAEAAREDHEDAEDLETKPTVDSEAEKAENEDRT) show a composition bias toward basic and acidic residues. Positions 539-589 (NQEERESSQADAAEAAREDHEDAEDLETKPTVDSEAEKAENEDRTAMPVLE) are disordered. Residue K567 forms a Glycyl lysine isopeptide (Lys-Gly) (interchain with G-Cter in SUMO) linkage.

Belongs to the krueppel C2H2-type zinc-finger protein family. In terms of processing, monosumoylated at Lys-567 by CBX4 and UHRF2. Sumoylation may potentiate ZNF131 inhibition of estrogen signaling. Sumoylation does not interfere with ubiquitination. Post-translationally, ubiquitinated.

Its subcellular location is the nucleus. Its function is as follows. May be involved in transcriptional regulation as a repressor of ESR1/ER-alpha signaling. Plays a role during development and organogenesis as well as in the function of the adult central nervous system. This is Zinc finger protein 131 (ZNF131) from Pongo abelii (Sumatran orangutan).